Reading from the N-terminus, the 239-residue chain is Ribonuclease PH (239 aa).

Phosphate-binding positions include arginine 87 and 125–127; that span reads GTR.

It belongs to the RNase PH family. Homohexameric ring arranged as a trimer of dimers.

It carries out the reaction tRNA(n+1) + phosphate = tRNA(n) + a ribonucleoside 5'-diphosphate. In terms of biological role, phosphorolytic 3'-5' exoribonuclease that plays an important role in tRNA 3'-end maturation. Removes nucleotide residues following the 3'-CCA terminus of tRNAs; can also add nucleotides to the ends of RNA molecules by using nucleoside diphosphates as substrates, but this may not be physiologically important. Probably plays a role in initiation of 16S rRNA degradation (leading to ribosome degradation) during starvation. In Syntrophomonas wolfei subsp. wolfei (strain DSM 2245B / Goettingen), this protein is Ribonuclease PH.